The primary structure comprises 496 residues: Bifunctional protein HldE (496 aa).

The segment at 1–335 (MIKHNPPSPE…GALFRSHGPT (335 aa)) is ribokinase. 211-214 (NRKE) contacts ATP. Residue Asp280 is part of the active site. The cytidylyltransferase stretch occupies residues 363–496 (FTNGCFDILH…IGKLRAGSTS (134 aa)).

It in the N-terminal section; belongs to the carbohydrate kinase PfkB family. This sequence in the C-terminal section; belongs to the cytidylyltransferase family. In terms of assembly, homodimer.

The enzyme catalyses D-glycero-beta-D-manno-heptose 7-phosphate + ATP = D-glycero-beta-D-manno-heptose 1,7-bisphosphate + ADP + H(+). The catalysed reaction is D-glycero-beta-D-manno-heptose 1-phosphate + ATP + H(+) = ADP-D-glycero-beta-D-manno-heptose + diphosphate. The protein operates within nucleotide-sugar biosynthesis; ADP-L-glycero-beta-D-manno-heptose biosynthesis; ADP-L-glycero-beta-D-manno-heptose from D-glycero-beta-D-manno-heptose 7-phosphate: step 1/4. Its pathway is nucleotide-sugar biosynthesis; ADP-L-glycero-beta-D-manno-heptose biosynthesis; ADP-L-glycero-beta-D-manno-heptose from D-glycero-beta-D-manno-heptose 7-phosphate: step 3/4. Catalyzes the phosphorylation of D-glycero-D-manno-heptose 7-phosphate at the C-1 position to selectively form D-glycero-beta-D-manno-heptose-1,7-bisphosphate. Functionally, catalyzes the ADP transfer from ATP to D-glycero-beta-D-manno-heptose 1-phosphate, yielding ADP-D-glycero-beta-D-manno-heptose. In Mesorhizobium japonicum (strain LMG 29417 / CECT 9101 / MAFF 303099) (Mesorhizobium loti (strain MAFF 303099)), this protein is Bifunctional protein HldE.